Consider the following 117-residue polypeptide: Transcription elongation factor A protein-like 8 (117 aa).

Residues 1-81 (MQKSCDENEG…PEEVIRGVDE (81 aa)) form a disordered region. A compositionally biased stretch (basic and acidic residues) spans 41–81 (NVREETDGSLRGEPAEPSPEPKEDTPARHLNPEEVIRGVDE). Positions 73–100 (EEVIRGVDELERLREEIRRVRNKFVLMH) form a coiled coil.

This sequence belongs to the TFS-II family. TFA subfamily. In terms of tissue distribution, highly expressed in kidney. Moderately expressed in heart and lung. Low expression in brain and liver. Expression is up-regulated in nephrectomized kidney.

It is found in the nucleus. In terms of biological role, may be involved in transcriptional regulation. This chain is Transcription elongation factor A protein-like 8 (Tceal8), found in Rattus norvegicus (Rat).